Here is a 76-residue protein sequence, read N- to C-terminus: MYSFVSEETGTLIVNSVLLFLAFVVFLLVTLAILTALRLCAYCCNIVNVSLVKPTVYVYSRVKNLNSSEGVPDLLV.

The Virion surface segment spans residues Met1–Ser16. Residues Val17–Leu37 form a helical membrane-spanning segment. Topologically, residues Arg38 to Val76 are intravirion.

It belongs to the betacoronaviruses E protein family. Homopentamer. Interacts with membrane protein M in the budding compartment of the host cell, which is located between endoplasmic reticulum and the Golgi complex. Interacts with Nucleoprotein.

It localises to the host Golgi apparatus membrane. Its function is as follows. Plays a central role in virus morphogenesis and assembly. Acts as a viroporin and self-assembles in host membranes forming pentameric protein-lipid pores that allow ion transport. Also plays a role in the induction of apoptosis. In Rhinolophus sinicus (Chinese rufous horseshoe bat), this protein is Envelope small membrane protein.